A 140-amino-acid chain; its full sequence is Glycine cleavage system H protein (140 aa).

The Lipoyl-binding domain maps to E22–K104. K63 is modified (N6-lipoyllysine).

The protein belongs to the GcvH family. As to quaternary structure, the glycine cleavage system is composed of four proteins: P, T, L and H. It depends on (R)-lipoate as a cofactor.

Functionally, the glycine cleavage system catalyzes the degradation of glycine. The H protein shuttles the methylamine group of glycine from the P protein to the T protein. This is Glycine cleavage system H protein from Magnetococcus marinus (strain ATCC BAA-1437 / JCM 17883 / MC-1).